The primary structure comprises 329 residues: DNA-directed RNA polymerase subunit alpha (329 aa).

The segment at 1 to 235 (MQGSVTEFLK…EQLEAFVDLR (235 aa)) is alpha N-terminal domain (alpha-NTD). The tract at residues 249-329 (FDPILLRPVD…NWPPASIADE (81 aa)) is alpha C-terminal domain (alpha-CTD).

This sequence belongs to the RNA polymerase alpha chain family. In terms of assembly, homodimer. The RNAP catalytic core consists of 2 alpha, 1 beta, 1 beta' and 1 omega subunit. When a sigma factor is associated with the core the holoenzyme is formed, which can initiate transcription.

The catalysed reaction is RNA(n) + a ribonucleoside 5'-triphosphate = RNA(n+1) + diphosphate. Functionally, DNA-dependent RNA polymerase catalyzes the transcription of DNA into RNA using the four ribonucleoside triphosphates as substrates. The protein is DNA-directed RNA polymerase subunit alpha of Photorhabdus laumondii subsp. laumondii (strain DSM 15139 / CIP 105565 / TT01) (Photorhabdus luminescens subsp. laumondii).